The chain runs to 220 residues: Adenylate kinase (220 aa).

Residue 10–15 (GAGKGT) participates in ATP binding. The tract at residues 30 to 59 (STGDMLRAAVKAGTPLGVEAKGYMDAGKLV) is NMP. Residues threonine 31, arginine 36, 57–59 (KLV), 85–88 (GFPR), and glutamine 92 each bind AMP. Residues 122–159 (GRRTHPASGRTYHVKFNPPKVEGHDDVTGEPLIQRDDD) form an LID region. ATP contacts are provided by residues arginine 123 and 132-133 (TY). AMP contacts are provided by arginine 156 and arginine 167. Glycine 206 lines the ATP pocket.

It belongs to the adenylate kinase family. In terms of assembly, monomer.

The protein localises to the cytoplasm. The enzyme catalyses AMP + ATP = 2 ADP. Its pathway is purine metabolism; AMP biosynthesis via salvage pathway; AMP from ADP: step 1/1. Its function is as follows. Catalyzes the reversible transfer of the terminal phosphate group between ATP and AMP. Plays an important role in cellular energy homeostasis and in adenine nucleotide metabolism. In Burkholderia cenocepacia (strain HI2424), this protein is Adenylate kinase.